A 168-amino-acid chain; its full sequence is MKRIIALLFFFLIAFGYSLSPEEEKQLIRDIAEIKATLKTFMEQTDKRFQDLNQRINELREDMNKRFEQVDKRFEQVDKRFEQINNELNRLIQIMVGIFAGQIALVAAVIGFAWWDRRTIIRKSKEETFEEMEKELRPEKFKKLLNALREKAKTDKELEAILKKYGLL.

2 helical membrane passes run 4–24 (IIAL…PEEE) and 94–114 (IMVG…GFAW).

It to A.aeolicus aq_1446.

It is found in the cell membrane. This is an uncharacterized protein from Aquifex aeolicus (strain VF5).